A 409-amino-acid chain; its full sequence is Terpredoxin reductase (409 aa).

Position 7 to 38 (7 to 38 (TTVIVGAGHAGTAAAFFLREFGYHGRVLLLSA)) interacts with FAD. Position 151–159 (151–159 (GGGFIGLEI)) interacts with NAD(+).

Requires FAD as cofactor.

The oxidation of alpha-terpineol by cytochrome p450-TERP requires the participation of a flavoprotein, terpredoxin reductase, and an iron-sulfur protein, terpredoxin, to mediate the transfer of electrons from NADH to P450 for oxygen activation. The chain is Terpredoxin reductase (terPA) from Pseudomonas sp.